The following is a 24-amino-acid chain: Grammistin Gs G (24 aa).

Belongs to the grammistin family. Group 1 subfamily. In terms of assembly, exists as aggregates of 3-4 molecules. As to expression, expressed by the skin glands.

It is found in the secreted. Its function is as follows. Thanks to its abundant amphiphilic alpha-helices, it may integrate into membrane phospholipids, leading to lysis of the membrane. Its high hemolytic activity is inhibited by phospholipids, but not by cholesterol. Has antibacterial activity with a broad spectrum against various species of bacteria including both Gram-positive and Gram-negative groups. Also has high ichthyotoxic activity. The sequence is that of Grammistin Gs G from Grammistes sexlineatus (Goldenstriped soapfish).